A 188-amino-acid chain; its full sequence is Threonylcarbamoyl-AMP synthase (188 aa).

Residues 3–188 (QLHPSEIKDL…RSGKILRNGQ (186 aa)) enclose the YrdC-like domain.

It belongs to the SUA5 family. TsaC subfamily.

The protein resides in the cytoplasm. It catalyses the reaction L-threonine + hydrogencarbonate + ATP = L-threonylcarbamoyladenylate + diphosphate + H2O. Its function is as follows. Required for the formation of a threonylcarbamoyl group on adenosine at position 37 (t(6)A37) in tRNAs that read codons beginning with adenine. Catalyzes the conversion of L-threonine, HCO(3)(-)/CO(2) and ATP to give threonylcarbamoyl-AMP (TC-AMP) as the acyladenylate intermediate, with the release of diphosphate. The chain is Threonylcarbamoyl-AMP synthase from Shewanella sp. (strain ANA-3).